The sequence spans 284 residues: Ribose-phosphate pyrophosphokinase (284 aa).

ATP-binding positions include 34-36 and 92-93; these read DNE and RQ. The Mg(2+) site is built by His-125 and Asp-163. Lys-186 is an active-site residue. D-ribose 5-phosphate contacts are provided by residues Arg-188, Asp-212, and 216–220; that span reads STGGT.

This sequence belongs to the ribose-phosphate pyrophosphokinase family. Class III (archaeal) subfamily. In terms of assembly, homotetramer. Mg(2+) is required as a cofactor.

The protein localises to the cytoplasm. The catalysed reaction is D-ribose 5-phosphate + ATP = 5-phospho-alpha-D-ribose 1-diphosphate + AMP + H(+). Its pathway is metabolic intermediate biosynthesis; 5-phospho-alpha-D-ribose 1-diphosphate biosynthesis; 5-phospho-alpha-D-ribose 1-diphosphate from D-ribose 5-phosphate (route I): step 1/1. Its activity is regulated as follows. Activated by inorganic phosphate, with a maximal activity at 190 mM. Above this concentration inorganic phosphate progressively inhibits the kinase. Completely inhibited by ADP, and partially inhibited by alpha,beta-methylene ATP (mATP). Lack of allosteric regulation. Its function is as follows. Involved in the biosynthesis of the central metabolite phospho-alpha-D-ribosyl-1-pyrophosphate (PRPP) via the transfer of pyrophosphoryl group from ATP to 1-hydroxyl of ribose-5-phosphate (Rib-5-P). It can also use dATP as diphosphoryl donor. The sequence is that of Ribose-phosphate pyrophosphokinase from Methanocaldococcus jannaschii (strain ATCC 43067 / DSM 2661 / JAL-1 / JCM 10045 / NBRC 100440) (Methanococcus jannaschii).